Here is a 115-residue protein sequence, read N- to C-terminus: Large ribosomal subunit protein uL22 (115 aa).

It belongs to the universal ribosomal protein uL22 family. As to quaternary structure, part of the 50S ribosomal subunit.

In terms of biological role, this protein binds specifically to 23S rRNA; its binding is stimulated by other ribosomal proteins, e.g. L4, L17, and L20. It is important during the early stages of 50S assembly. It makes multiple contacts with different domains of the 23S rRNA in the assembled 50S subunit and ribosome. Functionally, the globular domain of the protein is located near the polypeptide exit tunnel on the outside of the subunit, while an extended beta-hairpin is found that lines the wall of the exit tunnel in the center of the 70S ribosome. In Coxiella burnetii (strain CbuK_Q154) (Coxiella burnetii (strain Q154)), this protein is Large ribosomal subunit protein uL22.